Here is a 472-residue protein sequence, read N- to C-terminus: Adenosylhomocysteinase (472 aa).

Residues threonine 62, aspartate 137, and glutamate 197 each contribute to the substrate site. Residue 198 to 200 (TTT) coordinates NAD(+). Substrate is bound by residues lysine 227 and aspartate 231. Residues asparagine 232, 261 to 266 (GYGDVG), glutamate 284, asparagine 319, 340 to 342 (IGH), and asparagine 385 each bind NAD(+).

It belongs to the adenosylhomocysteinase family. Requires NAD(+) as cofactor.

The protein resides in the cytoplasm. The enzyme catalyses S-adenosyl-L-homocysteine + H2O = L-homocysteine + adenosine. Its pathway is amino-acid biosynthesis; L-homocysteine biosynthesis; L-homocysteine from S-adenosyl-L-homocysteine: step 1/1. In terms of biological role, may play a key role in the regulation of the intracellular concentration of adenosylhomocysteine. The sequence is that of Adenosylhomocysteinase from Bordetella pertussis (strain Tohama I / ATCC BAA-589 / NCTC 13251).